The following is a 505-amino-acid chain: Acetylcholine receptor subunit beta (505 aa).

An N-terminal signal peptide occupies residues 1–24 (MTPGALLLLLLGVLGAHLAPGARG). Topologically, residues 25–245 (SEAEGRLREK…VTFYLIIRRK (221 aa)) are extracellular. Cys-152 and Cys-166 form a disulfide bridge. Asn-165 carries N-linked (GlcNAc...) asparagine glycosylation. 3 helical membrane-spanning segments follow: residues 246–270 (PLFYLVNVIAPCILITLLAIFVFYL), 278–295 (MGLSIFALLTLTVFLLLL), and 312–333 (YLMFTMVLVTFSVILSVVVLNL). Residues 334-473 (HHRSPHTHQM…WQFVAMVVDR (140 aa)) are Cytoplasmic-facing. Residues 365-391 (KPERDQMQEPPSIAPRDSPGSGWGRGT) are disordered. Tyr-394 is subject to Phosphotyrosine; by Tyr-kinases. Residues 474–492 (LFLWTFIIFTSVGTLVIFL) form a helical membrane-spanning segment.

This sequence belongs to the ligand-gated ion channel (TC 1.A.9) family. Acetylcholine receptor (TC 1.A.9.1) subfamily. Beta-1/CHRNB1 sub-subfamily. As to quaternary structure, pentamer of two alpha chains, and one each of the beta, delta, and gamma (in immature muscle) or epsilon (in mature muscle) chains. The muscle heteropentamer composed of alpha-1, beta-1, delta, epsilon subunits interacts with the alpha-conotoxin ImII.

The protein localises to the postsynaptic cell membrane. The protein resides in the cell membrane. The enzyme catalyses K(+)(in) = K(+)(out). It carries out the reaction Na(+)(in) = Na(+)(out). In terms of biological role, after binding acetylcholine, the AChR responds by an extensive change in conformation that affects all subunits and leads to opening of an ion-conducting channel across the plasma membrane. This is Acetylcholine receptor subunit beta (CHRNB1) from Bos taurus (Bovine).